We begin with the raw amino-acid sequence, 77 residues long: Acyl carrier protein (77 aa).

In terms of domain architecture, Carrier spans 2-77 (STIEERVKKI…EAIDYVVSHQ (76 aa)). S37 is modified (O-(pantetheine 4'-phosphoryl)serine).

The protein belongs to the acyl carrier protein (ACP) family. 4'-phosphopantetheine is transferred from CoA to a specific serine of apo-ACP by AcpS. This modification is essential for activity because fatty acids are bound in thioester linkage to the sulfhydryl of the prosthetic group.

It localises to the cytoplasm. Its pathway is lipid metabolism; fatty acid biosynthesis. Carrier of the growing fatty acid chain in fatty acid biosynthesis. This Oceanospirillum linum protein is Acyl carrier protein.